A 66-amino-acid chain; its full sequence is Cytochrome c oxidase subunit 26, mitochondrial (66 aa).

Residues 1-8 (MFFSQVLR) constitute a mitochondrion transit peptide. Residues 9–27 (SSARAAPIKRYTGGRIGES) are Mitochondrial matrix-facing. A helical transmembrane segment spans residues 28–64 (WVITEGRRLIPEIFQWSAVLSVCLGWPGAVYFFSKAR). Residues 65–66 (KA) are Mitochondrial intermembrane-facing.

This sequence belongs to the fungal cytochrome c oxidase subunit 26 family. As to quaternary structure, component of the cytochrome c oxidase (complex IV, CIV), a multisubunit enzyme composed of 12 subunits. The complex is composed of a catalytic core of 3 subunits COX1, COX2 and COX3, encoded in the mitochondrial DNA, and 9 supernumerary subunits COX4, COX5A (or COX5B), COX6, COX7, COX8, COX9, COX12, COX13 and COX26, which are encoded in the nuclear genome. The complex exists as a monomer or a dimer and forms supercomplexes (SCs) in the inner mitochondrial membrane with a dimer of ubiquinol-cytochrome c oxidoreductase (cytochrome b-c1 complex, complex III, CIII), resulting in 2 different assemblies (supercomplexes III(2)IV and III(2)IV(2)).

The protein localises to the mitochondrion inner membrane. Its function is as follows. Component of the cytochrome c oxidase, the last enzyme in the mitochondrial electron transport chain which drives oxidative phosphorylation. The respiratory chain contains 3 multisubunit complexes succinate dehydrogenase (complex II, CII), ubiquinol-cytochrome c oxidoreductase (cytochrome b-c1 complex, complex III, CIII) and cytochrome c oxidase (complex IV, CIV), that cooperate to transfer electrons derived from NADH and succinate to molecular oxygen, creating an electrochemical gradient over the inner membrane that drives transmembrane transport and the ATP synthase. Cytochrome c oxidase is the component of the respiratory chain that catalyzes the reduction of oxygen to water. Electrons originating from reduced cytochrome c in the intermembrane space (IMS) are transferred via the dinuclear copper A center (CU(A)) of COX2 and heme A of COX1 to the active site in COX1, a binuclear center (BNC) formed by heme A3 and copper B (CU(B)). The BNC reduces molecular oxygen to 2 water molecules using 4 electrons from cytochrome c in the IMS and 4 protons from the mitochondrial matrix. This chain is Cytochrome c oxidase subunit 26, mitochondrial (COX26), found in Saccharomyces cerevisiae (strain ATCC 204508 / S288c) (Baker's yeast).